The sequence spans 283 residues: GTPase Era (283 aa).

Residues 7–175 (YCGHVIIVGK…KNIIKSYLPE (169 aa)) enclose the Era-type G domain. A G1 region spans residues 15–22 (GKANVGKS). 15-22 (GKANVGKS) contributes to the GTP binding site. Residues 41-45 (NTTQS) are G2. Residues 62 to 65 (DTPG) form a G3 region. Residues 62 to 66 (DTPGV) and 124 to 127 (NKID) each bind GTP. Residues 124-127 (NKID) are G4. Residues 154–156 (ISA) are G5. The region spanning 198–283 (IREQLILFLG…HLVLWVKDKN (86 aa)) is the KH type-2 domain.

It belongs to the TRAFAC class TrmE-Era-EngA-EngB-Septin-like GTPase superfamily. Era GTPase family. Monomer.

It is found in the cytoplasm. The protein localises to the cell membrane. In terms of biological role, an essential GTPase that binds both GDP and GTP, with rapid nucleotide exchange. Plays a role in 16S rRNA processing and 30S ribosomal subunit biogenesis and possibly also in cell cycle regulation and energy metabolism. The polypeptide is GTPase Era (Buchnera aphidicola subsp. Acyrthosiphon pisum (strain Tuc7)).